The sequence spans 363 residues: tRNA dimethylallyltransferase (363 aa).

The segment at 1 to 55 (MLACNDDTSLYLLVKQVTKKEIYSNDLENGNVKRGASMQSLYLIGDPKCCRNNSS) is unknown insert. Residue 65–72 (GPTASGKS) coordinates ATP. Position 67 to 72 (67 to 72 (TASGKS)) interacts with substrate. 2 interaction with substrate tRNA regions span residues 90-93 (DSMQ) and 214-218 (QRLIR).

The protein belongs to the IPP transferase family. Monomer. It depends on Mg(2+) as a cofactor.

The catalysed reaction is adenosine(37) in tRNA + dimethylallyl diphosphate = N(6)-dimethylallyladenosine(37) in tRNA + diphosphate. Catalyzes the transfer of a dimethylallyl group onto the adenine at position 37 in tRNAs that read codons beginning with uridine, leading to the formation of N6-(dimethylallyl)adenosine (i(6)A). The protein is tRNA dimethylallyltransferase of Rickettsia conorii (strain ATCC VR-613 / Malish 7).